Reading from the N-terminus, the 764-residue chain is Molybdenum cofactor sulfurase 3 (764 aa).

Lys228 is modified (N6-(pyridoxal phosphate)lysine). Cys394 is a catalytic residue. Residues 607–762 (LRLLKQSDEE…LYCNSVVEGL (156 aa)) enclose the MOSC domain.

This sequence belongs to the class-V pyridoxal-phosphate-dependent aminotransferase family. MOCOS subfamily. It depends on pyridoxal 5'-phosphate as a cofactor.

It catalyses the reaction Mo-molybdopterin + L-cysteine + AH2 = thio-Mo-molybdopterin + L-alanine + A + H2O. In terms of biological role, sulfurates the molybdenum cofactor. Sulfation of molybdenum is essential for xanthine dehydrogenase (XDH) and aldehyde oxidase (ADO) enzymes in which molybdenum cofactor is liganded by 1 oxygen and 1 sulfur atom in active form. The protein is Molybdenum cofactor sulfurase 3 of Aedes aegypti (Yellowfever mosquito).